Reading from the N-terminus, the 274-residue chain is MNKTAIALLALLASSASLAATPWQKITQPVPGSAQSIGSFSNGCIVGADTLPIQSEHYQVMRTDQRRYFGHPDLVMFIQRLSRQVSNLGMGTVLIGDMGMPAGGRFNGGHASHQTGLDVDIFLQLPKTRWTSAQLLRPQALDLVSRDGKHVVPTLWKPEIFSLIKLAAQDKDVTRIFVNPAIKQQLCLDAGTDRDWLRKVRPWFQHRAHMHVRLRCPADSLECEDQPLPPPGDGCGAELQSWFEPPKPGTTKPEKKTPPPLPPSCQALLDEHVI.

Residues 1–19 (MNKTAIALLALLASSASLA) form the signal peptide. Disulfide bonds link Cys44–Cys265, Cys187–Cys235, and Cys216–Cys223. Zn(2+) contacts are provided by His110, His113, Asp120, Asp147, His150, and His211. The tract at residues 227 to 274 (PLPPPGDGCGAELQSWFEPPKPGTTKPEKKTPPPLPPSCQALLDEHVI) is disordered.

Belongs to the peptidase M74 family. Dimer. The cofactor is Zn(2+).

It localises to the periplasm. Murein endopeptidase that cleaves the D-alanyl-meso-2,6-diamino-pimelyl amide bond that connects peptidoglycan strands. Likely plays a role in the removal of murein from the sacculus. This Escherichia coli O6:K15:H31 (strain 536 / UPEC) protein is Penicillin-insensitive murein endopeptidase.